The following is a 498-amino-acid chain: Glycerol kinase (498 aa).

An ADP-binding site is contributed by threonine 12. ATP-binding residues include threonine 12, threonine 13, and serine 14. Threonine 12 is a sn-glycerol 3-phosphate binding site. Arginine 16 lines the ADP pocket. Residues arginine 82, glutamate 83, and tyrosine 134 each contribute to the sn-glycerol 3-phosphate site. Glycerol-binding residues include arginine 82, glutamate 83, and tyrosine 134. Histidine 230 carries the post-translational modification Phosphohistidine; by HPr. Aspartate 244 lines the sn-glycerol 3-phosphate pocket. The glycerol site is built by aspartate 244 and glutamine 245. Residues threonine 266, glycine 309, glutamine 313, glycine 410, and asparagine 414 each contribute to the ADP site. 4 residues coordinate ATP: threonine 266, glycine 309, glutamine 313, and glycine 410.

The protein belongs to the FGGY kinase family. Homotetramer and homodimer (in equilibrium). The phosphoenolpyruvate-dependent sugar phosphotransferase system (PTS), including enzyme I, and histidine-containing protein (HPr) are required for the phosphorylation, which leads to the activation of the enzyme.

It carries out the reaction glycerol + ATP = sn-glycerol 3-phosphate + ADP + H(+). Its pathway is polyol metabolism; glycerol degradation via glycerol kinase pathway; sn-glycerol 3-phosphate from glycerol: step 1/1. Its activity is regulated as follows. Activated by phosphorylation and inhibited by fructose 1,6-bisphosphate (FBP). Its function is as follows. Key enzyme in the regulation of glycerol uptake and metabolism. Catalyzes the phosphorylation of glycerol to yield sn-glycerol 3-phosphate. This is Glycerol kinase from Staphylococcus aureus (strain COL).